Here is a 658-residue protein sequence, read N- to C-terminus: Biosynthetic arginine decarboxylase (658 aa).

K127 bears the N6-(pyridoxal phosphate)lysine mark. 307-317 (FDVGGGLGVDY) is a substrate binding site.

This sequence belongs to the Orn/Lys/Arg decarboxylase class-II family. SpeA subfamily. Mg(2+) is required as a cofactor. Requires pyridoxal 5'-phosphate as cofactor.

It carries out the reaction L-arginine + H(+) = agmatine + CO2. Its pathway is amine and polyamine biosynthesis; agmatine biosynthesis; agmatine from L-arginine: step 1/1. Functionally, catalyzes the biosynthesis of agmatine from arginine. The chain is Biosynthetic arginine decarboxylase from Salmonella typhi.